The sequence spans 153 residues: Endoribonuclease YbeY (153 aa).

Zn(2+)-binding residues include H114, H118, and H124.

Belongs to the endoribonuclease YbeY family. Requires Zn(2+) as cofactor.

Its subcellular location is the cytoplasm. Its function is as follows. Single strand-specific metallo-endoribonuclease involved in late-stage 70S ribosome quality control and in maturation of the 3' terminus of the 16S rRNA. This Shewanella baltica (strain OS223) protein is Endoribonuclease YbeY.